We begin with the raw amino-acid sequence, 190 residues long: Hypoxanthine/guanine phosphoribosyltransferase (190 aa).

This sequence belongs to the purine/pyrimidine phosphoribosyltransferase family. Archaeal HPRT subfamily. As to quaternary structure, homodimer.

The protein resides in the cytoplasm. The enzyme catalyses IMP + diphosphate = hypoxanthine + 5-phospho-alpha-D-ribose 1-diphosphate. It catalyses the reaction GMP + diphosphate = guanine + 5-phospho-alpha-D-ribose 1-diphosphate. Its pathway is purine metabolism; IMP biosynthesis via salvage pathway; IMP from hypoxanthine: step 1/1. Catalyzes a salvage reaction resulting in the formation of IMP that is energically less costly than de novo synthesis. In Methanosarcina barkeri (strain Fusaro / DSM 804), this protein is Hypoxanthine/guanine phosphoribosyltransferase.